Consider the following 183-residue polypeptide: SAYSvFN domain-containing protein 1 (183 aa).

Topologically, residues 1 to 105 (MEQRLAEFRA…SFLTNITFLK (105 aa)) are cytoplasmic. The segment at 11-36 (ARKRAGLAAQPPAASQGAQTPGEKAE) is disordered. Residues 16-36 (GLAAQPPAASQGAQTPGEKAE) are compositionally biased toward low complexity. Residues 91-105 (SCWDQSFLTNITFLK) form a middle helical (MH) region. An intramembrane region (helical) is located at residues 106–126 (VLLWLVLLGLFVELEFGLAYF). Over 127–183 (VLSLFYWMYVGTRGPEEKKEGEKSAYSVFNPGCEAIQGTLTAEQLERELQLRPLAGR) the chain is Cytoplasmic.

This sequence belongs to the SAYSD1 family. Associates (via N-terminus) with ribosomes.

Its subcellular location is the endoplasmic reticulum membrane. The protein localises to the cytoplasmic vesicle membrane. Functionally, ufmylation 'reader' component of a translocation-associated quality control pathway, a mechanism that takes place when a ribosome has stalled during translation, and which is required to degrade clogged substrates. Specifically recognizes and binds ufmylated ribosomes when a ribosome has stalled, promoting the transport of stalled nascent chain via the TRAPP complex to lysosomes for degradation. The chain is SAYSvFN domain-containing protein 1 from Homo sapiens (Human).